The chain runs to 207 residues: Protein GrpE (207 aa).

Over residues 1–11 (MTETDGQKDNN) the composition is skewed to basic and acidic residues. The tract at residues 1 to 39 (MTETDGQKDNNQDTAQAAADPVVSKPYIMPDDPEEGSNE) is disordered.

Belongs to the GrpE family. In terms of assembly, homodimer.

The protein localises to the cytoplasm. Participates actively in the response to hyperosmotic and heat shock by preventing the aggregation of stress-denatured proteins, in association with DnaK and GrpE. It is the nucleotide exchange factor for DnaK and may function as a thermosensor. Unfolded proteins bind initially to DnaJ; upon interaction with the DnaJ-bound protein, DnaK hydrolyzes its bound ATP, resulting in the formation of a stable complex. GrpE releases ADP from DnaK; ATP binding to DnaK triggers the release of the substrate protein, thus completing the reaction cycle. Several rounds of ATP-dependent interactions between DnaJ, DnaK and GrpE are required for fully efficient folding. The polypeptide is Protein GrpE (Rhodopseudomonas palustris (strain TIE-1)).